A 389-amino-acid polypeptide reads, in one-letter code: Methylthioribose kinase (389 aa).

ATP contacts are provided by residues asparagine 37, lysine 52, and 106-108; that span reads EDL. Aspartate 224 contacts substrate. Position 241–243 (241–243) interacts with ATP; it reads DPE. A substrate-binding site is contributed by arginine 331.

This sequence belongs to the methylthioribose kinase family. In terms of assembly, homodimer.

The enzyme catalyses 5-(methylsulfanyl)-D-ribose + ATP = 5-(methylsulfanyl)-alpha-D-ribose 1-phosphate + ADP + H(+). The protein operates within amino-acid biosynthesis; L-methionine biosynthesis via salvage pathway; S-methyl-5-thio-alpha-D-ribose 1-phosphate from S-methyl-5'-thioadenosine (hydrolase route): step 2/2. In terms of biological role, catalyzes the phosphorylation of methylthioribose into methylthioribose-1-phosphate. The chain is Methylthioribose kinase from Exiguobacterium sibiricum (strain DSM 17290 / CCUG 55495 / CIP 109462 / JCM 13490 / 255-15).